The primary structure comprises 160 residues: MAKQKKHPQGNIAQNKKALHDYFIEQKFEAGLALSGWEVKSLRAGKAQLVDSYVLLKDGEAWLMGSHITPLKTASTHVIADPTRTRKLLLHKRELGRLFGSVQQKGYACVALSLYWKKHLIKCEIALAKGKKEYDKRDTEKARDSDREIQRAIRSKGKED.

The tract at residues 131-160 (KKEYDKRDTEKARDSDREIQRAIRSKGKED) is disordered.

This sequence belongs to the SmpB family.

The protein localises to the cytoplasm. In terms of biological role, required for rescue of stalled ribosomes mediated by trans-translation. Binds to transfer-messenger RNA (tmRNA), required for stable association of tmRNA with ribosomes. tmRNA and SmpB together mimic tRNA shape, replacing the anticodon stem-loop with SmpB. tmRNA is encoded by the ssrA gene; the 2 termini fold to resemble tRNA(Ala) and it encodes a 'tag peptide', a short internal open reading frame. During trans-translation Ala-aminoacylated tmRNA acts like a tRNA, entering the A-site of stalled ribosomes, displacing the stalled mRNA. The ribosome then switches to translate the ORF on the tmRNA; the nascent peptide is terminated with the 'tag peptide' encoded by the tmRNA and targeted for degradation. The ribosome is freed to recommence translation, which seems to be the essential function of trans-translation. This chain is SsrA-binding protein, found in Azotobacter vinelandii (strain DJ / ATCC BAA-1303).